Here is a 709-residue protein sequence, read N- to C-terminus: ATP-binding cassette sub-family F member 3 (709 aa).

Ala-2 carries the post-translational modification N-acetylalanine. Residues 129–143 (RLKAKQEKRSEKETL) show a composition bias toward basic and acidic residues. Positions 129-171 (RLKAKQEKRSEKETLKTSSPLVLEEASASQAGSRKESRLESSG) are disordered. Ser-155, Ser-157, and Ser-161 each carry phosphoserine. A compositionally biased stretch (basic and acidic residues) spans 161-171 (SRKESRLESSG). ABC transporter domains lie at 178-424 (VRIE…LNQQ) and 492-707 (LQLD…RREG). Residue 210–217 (GRNGLGKT) participates in ATP binding. Position 283 is a phosphoserine (Ser-283). 525-532 (GENGAGKS) contacts ATP.

Belongs to the ABC transporter superfamily. ABCF family. EF3 subfamily.

Functionally, displays an antiviral effect against flaviviruses such as west Nile virus (WNV) in the presence of OAS1B. The polypeptide is ATP-binding cassette sub-family F member 3 (Abcf3) (Rattus norvegicus (Rat)).